We begin with the raw amino-acid sequence, 960 residues long: Dynamin-like GTPase OPA1, mitochondrial (960 aa).

The N-terminal 87 residues, 1–87, are a transit peptide targeting the mitochondrion; that stretch reads MWRAGRAAVA…IKYGYQPRRN (87 aa). Residues 88–96 are Mitochondrial matrix-facing; that stretch reads FWPARLAAR. A helical membrane pass occupies residues 97 to 113; it reads LLKLRYIILGSAVGGGY. The Mitochondrial intermembrane segment spans residues 114–770; it reads TAKKTFDEWK…NAIENMIGPD (657 aa). Residues 210–254 adopt a coiled-coil conformation; it reads SDKEKIDQLQEELLHTQLKYQRILERLEKENKELRKLVLQKDDKG. The LQQQIQ motif motif lies at 217-222; it reads QLQEEL. Lysine 228 bears the N6-acetyllysine mark. Residues 285-561 enclose the Dynamin-type G domain; the sequence is QDHLPRVVVV…FWKMVRESVE (277 aa). Residues 295–302 are G1 motif; that stretch reads GDQSAGKT. The GTP site is built by serine 298, glycine 300, lysine 301, threonine 302, serine 303, and glycine 317. Threonine 302 is a Mg(2+) binding site. Residues 321–324 are G2 motif; sequence MMTR. Mg(2+) is bound by residues threonine 323 and aspartate 398. The G3 motif stretch occupies residues 398-401; that stretch reads DLPG. Residues 467–470 form a G4 motif region; that stretch reads TKVD. Residues lysine 468, aspartate 470, and threonine 503 each contribute to the GTP site. The tract at residues 501–504 is G5 motif; that stretch reads VVTG. Stalk region regions lie at residues 589–836 and 874–928; these read DRNE…IKDT and CNDV…VKLL. A paddle region region spans residues 736–856; the sequence is SDKQQWDAAI…KTALNHCNLC (121 aa). An intramembrane segment occupies 771-781; it reads WKKRWMYWKNR. Residues 782-960 lie on the Mitochondrial intermembrane side of the membrane; the sequence is TQEQCVHNET…AFIEALHQEK (179 aa). An intrachain disulfide couples cysteine 856 to cysteine 874. The stretch at 895–960 forms a coiled coil; sequence RQQLTNTEVR…AFIEALHQEK (66 aa).

Belongs to the TRAFAC class dynamin-like GTPase superfamily. Dynamin/Fzo/YdjA family. Oligomeric complex consisting of membrane-bound and soluble forms of OPA1. Interacts with RCC1L; RCC1L acts as a guanine nucleotide exchange factor (GEF) for OPA1 by exchanging bound GDP for free GTP. Interacts with CHCHD3 and IMMT; these interactions occur preferentially with soluble OPA1 forms. Interacts with PRELID1. Post-translationally, cleaved by OMA1 or YME1L downstream of the transmembrane region in response to different signals to generate soluble forms. Cleaved by OMA1 at position S1 following stress conditions, generating the short soluble form (Dynamin-like GTPase OPA1, short form; S-OPA1). AFG3L2 is involved in the regulation of OMA1-dependent processing of OPA1. PARL-dependent proteolytic processing releases an antiapoptotic soluble form not required for mitochondrial fusion. In terms of processing, cleavage at position S2 by YME1L is required to mediate oxidative phosphorylation (OXPHOS)-induced mitochondrial fusion. Cleavage occurs in the sequence motif Leu-Gln-Gln-Gln-Ile-Gln (LQQQIQ). Cleavage at position S3 by YME1L is required for membrane tubulation. In terms of tissue distribution, detected in brain (at protein level). Detected in brain, brain stem, heart, kidney, liver and skeletal muscle.

It localises to the mitochondrion inner membrane. The protein localises to the mitochondrion intermembrane space. The enzyme catalyses GTP + H2O = GDP + phosphate + H(+). Activated by guanine nucleotide exchange factor RCC1L. In terms of biological role, dynamin-related GTPase that is essential for normal mitochondrial morphology by mediating fusion of the mitochondrial inner membranes, regulating cristae morphology and maintaining respiratory chain function. Exists in two forms: the transmembrane, long form (Dynamin-like GTPase OPA1, long form; L-OPA1), which is tethered to the inner mitochondrial membrane, and the short soluble form (Dynamin-like GTPase OPA1, short form; S-OPA1), which results from proteolytic cleavage and localizes in the intermembrane space. Both forms (L-OPA1 and S-OPA1) cooperate to catalyze the fusion of the mitochondrial inner membrane. The equilibrium between L-OPA1 and S-OPA1 is essential: excess levels of S-OPA1, produced by cleavage by OMA1 following loss of mitochondrial membrane potential, lead to an impaired equilibrium between L-OPA1 and S-OPA1, inhibiting mitochondrial fusion. The balance between L-OPA1 and S-OPA1 also influences cristae shape and morphology. Involved in remodeling cristae and the release of cytochrome c during apoptosis. Proteolytic processing by PARL in response to intrinsic apoptotic signals may lead to disassembly of OPA1 oligomers and release of the caspase activator cytochrome C (CYCS) into the mitochondrial intermembrane space. Acts as a regulator of T-helper Th17 cells, which are characterized by cells with fused mitochondria with tight cristae, by mediating mitochondrial membrane remodeling: OPA1 is required for interleukin-17 (IL-17) production. Its role in mitochondrial morphology is required for mitochondrial genome maintenance. Constitutes the transmembrane long form (L-OPA1) that plays a central role in mitochondrial inner membrane fusion and cristae morphology. L-OPA1 and the soluble short form (S-OPA1) form higher-order helical assemblies that coordinate the fusion of mitochondrial inner membranes. Inner membrane-anchored L-OPA1 molecules initiate membrane remodeling by recruiting soluble S-OPA1 to rapidly polymerize into a flexible cylindrical scaffold encaging the mitochondrial inner membrane. Once at the membrane surface, the formation of S-OPA1 helices induce bilayer curvature. OPA1 dimerization through the paddle region, which inserts into cardiolipin-containing membrane, promotes GTP hydrolysis and the helical assembly of a flexible OPA1 lattice on the membrane, which drives membrane curvature and mitochondrial fusion. Plays a role in the maintenance and remodeling of mitochondrial cristae, some invaginations of the mitochondrial inner membrane that provide an increase in the surface area. Probably acts by forming helical filaments at the inside of inner membrane tubes with the shape and dimensions of crista junctions. The equilibrium between L-OPA1 and S-OPA1 influences cristae shape and morphology: increased L-OPA1 levels promote cristae stacking and elongated mitochondria, while increased S-OPA1 levels correlated with irregular cristae packing and round mitochondria shape. Its function is as follows. Constitutes the soluble short form (S-OPA1) generated by cleavage by OMA1, which plays a central role in mitochondrial inner membrane fusion and cristae morphology. The transmembrane long form (L-OPA1) and the S-OPA1 form higher-order helical assemblies that coordinate the fusion of mitochondrial inner membranes. Inner membrane-anchored L-OPA1 molecules initiate membrane remodeling by recruiting soluble S-OPA1 to rapidly polymerize into a flexible cylindrical scaffold encaging the mitochondrial inner membrane. Once at the membrane surface, the formation of S-OPA1 helices induce bilayer curvature. OPA1 dimerization through the paddle region, which inserts into cardiolipin-containing membrane, promotes GTP hydrolysis and the helical assembly of a flexible OPA1 lattice on the membrane, which drives membrane curvature and mitochondrial fusion. Excess levels of S-OPA1 produced by cleavage by OMA1 following stress conditions that induce loss of mitochondrial membrane potential, lead to an impaired equilibrium between L-OPA1 and S-OPA1, thereby inhibiting mitochondrial fusion. Involved in mitochondrial safeguard in response to transient mitochondrial membrane depolarization by mediating flickering: cleavage by OMA1 leads to excess production of S-OPA1, preventing mitochondrial hyperfusion. Plays a role in the maintenance and remodeling of mitochondrial cristae, some invaginations of the mitochondrial inner membrane that provide an increase in the surface area. Probably acts by forming helical filaments at the inside of inner membrane tubes with the shape and dimensions of crista junctions. The equilibrium between L-OPA1 and S-OPA1 influences cristae shape and morphology: increased L-OPA1 levels promote cristae stacking and elongated mitochondria, while increased S-OPA1 levels correlated with irregular cristae packing and round mitochondria shape. Functionally, isoforms that contain the alternative exon 4b are required for mitochondrial genome maintenance, possibly by anchoring the mitochondrial nucleoids to the inner mitochondrial membrane. The sequence is that of Dynamin-like GTPase OPA1, mitochondrial from Mus musculus (Mouse).